The chain runs to 353 residues: Photosystem II protein D1 (353 aa).

Thr2 bears the N-acetylthreonine mark. At Thr2 the chain carries Phosphothreonine. A run of 3 helical transmembrane segments spans residues Tyr29–Ser46, His118–Leu133, and Trp142–Ala156. His118 is a chlorophyll a binding site. Tyr126 contributes to the pheophytin a binding site. Residues Asp170 and Glu189 each contribute to the [CaMn4O5] cluster site. A helical membrane pass occupies residues Phe197 to Leu218. His198 lines the chlorophyll a pocket. A quinone-binding positions include His215 and Ser264–Phe265. Fe cation is bound at residue His215. Position 272 (His272) interacts with Fe cation. The helical transmembrane segment at Phe274 to Leu288 threads the bilayer. [CaMn4O5] cluster is bound by residues His332, Glu333, Asp342, and Ala344. Residues Ser345 to Ala353 constitute a propeptide that is removed on maturation.

The protein belongs to the reaction center PufL/M/PsbA/D family. As to quaternary structure, PSII is composed of 1 copy each of membrane proteins PsbA, PsbB, PsbC, PsbD, PsbE, PsbF, PsbH, PsbI, PsbJ, PsbK, PsbL, PsbM, PsbT, PsbX, PsbY, PsbZ, Psb30/Ycf12, at least 3 peripheral proteins of the oxygen-evolving complex and a large number of cofactors. It forms dimeric complexes. It depends on The D1/D2 heterodimer binds P680, chlorophylls that are the primary electron donor of PSII, and subsequent electron acceptors. It shares a non-heme iron and each subunit binds pheophytin, quinone, additional chlorophylls, carotenoids and lipids. D1 provides most of the ligands for the Mn4-Ca-O5 cluster of the oxygen-evolving complex (OEC). There is also a Cl(-1) ion associated with D1 and D2, which is required for oxygen evolution. The PSII complex binds additional chlorophylls, carotenoids and specific lipids. as a cofactor. Post-translationally, tyr-161 forms a radical intermediate that is referred to as redox-active TyrZ, YZ or Y-Z. In terms of processing, C-terminally processed by CTPA; processing is essential to allow assembly of the oxygen-evolving complex and thus photosynthetic growth.

Its subcellular location is the plastid. It is found in the chloroplast thylakoid membrane. It carries out the reaction 2 a plastoquinone + 4 hnu + 2 H2O = 2 a plastoquinol + O2. Photosystem II (PSII) is a light-driven water:plastoquinone oxidoreductase that uses light energy to abstract electrons from H(2)O, generating O(2) and a proton gradient subsequently used for ATP formation. It consists of a core antenna complex that captures photons, and an electron transfer chain that converts photonic excitation into a charge separation. The D1/D2 (PsbA/PsbD) reaction center heterodimer binds P680, the primary electron donor of PSII as well as several subsequent electron acceptors. This is Photosystem II protein D1 from Ostreococcus tauri.